We begin with the raw amino-acid sequence, 288 residues long: Small ribosomal subunit protein uS3 (288 aa).

The KH type-2 domain occupies 39-107 (VREYLKAKLK…PVAVNIEEVR (69 aa)). The tract at residues 209–288 (GRNDLPAAET…AAAAADGKGE (80 aa)) is disordered. Residues 219–238 (PRPEEERRPRGPRRDGRPGD) show a composition bias toward basic and acidic residues. A compositionally biased stretch (low complexity) spans 277–288 (APAAAAADGKGE).

It belongs to the universal ribosomal protein uS3 family. In terms of assembly, part of the 30S ribosomal subunit. Forms a tight complex with proteins S10 and S14.

Functionally, binds the lower part of the 30S subunit head. Binds mRNA in the 70S ribosome, positioning it for translation. The protein is Small ribosomal subunit protein uS3 of Acidovorax sp. (strain JS42).